Consider the following 61-residue polypeptide: MFTVFLLVVLATTVVSFPSDRASDGRDDEAKDERSDMHESGRKGRGRCCHPACGPNYSCGR.

The first 16 residues, 1–16 (MFTVFLLVVLATTVVS), serve as a signal peptide directing secretion. The propeptide occupies 17-43 (FPSDRASDGRDDEAKDERSDMHESGRK). Residues 19-46 (SDRASDGRDDEAKDERSDMHESGRKGRG) form a disordered region. Residues 21–42 (RASDGRDDEAKDERSDMHESGR) show a composition bias toward basic and acidic residues. 2 cysteine pairs are disulfide-bonded: cysteine 48–cysteine 53 and cysteine 49–cysteine 59. The residue at position 55 (proline 55) is a 4-hydroxyproline; partial. Cysteine 59 is subject to Cysteine amide.

The protein belongs to the conotoxin A superfamily. As to expression, expressed by the venom duct.

It is found in the secreted. In terms of biological role, alpha-conotoxins act on postsynaptic membranes, they bind to the nicotinic acetylcholine receptors (nAChR) and thus inhibit them. The chain is Alpha-conotoxin-like Sm1.1 from Conus stercusmuscarum (Fly-specked cone).